A 521-amino-acid chain; its full sequence is BAR/IMD domain-containing adapter protein 2 (521 aa).

The IMD domain occupies 1–250; it reads MSLSRSEEMH…VQLMQQIASS (250 aa). The stretch at 132–153 forms a coiled coil; sequence DALDKCQAELKKLRKKSQGSKN. Phosphoserine occurs at positions 262, 324, 326, and 337. A disordered region spans residues 299-370; that stretch reads VMNGVAGPDS…TLPRSSSMAA (72 aa). The span at 321–335 shows a compositional bias: low complexity; it reads QPKSLSPPQSQSKLS. The residue at position 341 (Thr-341) is a Phosphothreonine. Residue Ser-347 is modified to Phosphoserine. Residues 349–368 are compositionally biased toward polar residues; the sequence is TPKNSYATTENKTLPRSSSM. The residue at position 361 (Thr-361) is a Phosphothreonine. Phosphoserine is present on residues Ser-367, Ser-385, Ser-396, and Ser-455. The SH3 domain occupies 375–438; it reads NGRMRVKAIF…PFSYTRVLDS (64 aa). Positions 445-480 are disordered; it reads HMSLQQGKSSSTGNLLDKDDLAVPPPDYGTSSRAFP. Positions 447 to 458 are enriched in polar residues; sequence SLQQGKSSSTGN.

As to quaternary structure, homodimer. Interacts with CDC42 and RAC1 that have been activated by GTP binding. Interacts with ATN1, ADGRB1, DIAPH1, EPS8, SHANK1, SHANK2, SHANK3, TIAM1, WASF1 and WASF2. Interacts with ENAH after recruitment of CDC42. Post-translationally, phosphorylated on tyrosine residues by INSR in response to insulin treatment.

Its subcellular location is the cytoplasm. The protein localises to the membrane. It localises to the cell projection. The protein resides in the filopodium. It is found in the ruffle. Its subcellular location is the cytoskeleton. Adapter protein that links membrane-bound small G-proteins to cytoplasmic effector proteins. Necessary for CDC42-mediated reorganization of the actin cytoskeleton and for RAC1-mediated membrane ruffling. Involved in the regulation of the actin cytoskeleton by WASF family members and the Arp2/3 complex. Plays a role in neurite growth. Acts syngeristically with ENAH to promote filipodia formation. Plays a role in the reorganization of the actin cytoskeleton in response to bacterial infection. Participates in actin bundling when associated with EPS8, promoting filopodial protrusions. The polypeptide is BAR/IMD domain-containing adapter protein 2 (BAIAP2) (Cricetulus griseus (Chinese hamster)).